The following is a 200-amino-acid chain: Ras-related protein Rab-7b (200 aa).

Residues 15-22 (GALGVGKT), 34-40 (YEDYQTT), 63-67 (DTGGQ), 124-127 (NKID), and 154-155 (AK) contribute to the GTP site. 2 short sequence motifs (switch) span residues 28-41 (YVHK…QTTL) and 67-82 (QERF…KGSD). Ser-186 carries the phosphoserine modification. 2 S-geranylgeranyl cysteine lipidation sites follow: Cys-199 and Cys-200.

This sequence belongs to the small GTPase superfamily. Rab family.

Its subcellular location is the late endosome. The protein localises to the lysosome. It localises to the golgi apparatus. The protein resides in the trans-Golgi network. It is found in the cytoplasmic vesicle. Its subcellular location is the phagosome. The protein localises to the phagosome membrane. Controls vesicular trafficking from endosomes to the trans-Golgi network (TGN). Acts as a negative regulator of TLR9 signaling and can suppress TLR9-triggered TNFA, IL6, and IFNB production in macrophages by promoting TLR9 lysosomal degradation. Also negatively regulates TLR4 signaling in macrophages by promoting lysosomal degradation of TLR4. Promotes megakaryocytic differentiation by increasing NF-kappa-B-dependent IL6 production and subsequently enhancing the association of STAT3 with GATA1. Not involved in the regulation of the EGF- and EGFR degradation pathway. This chain is Ras-related protein Rab-7b (RAB7B), found in Bos taurus (Bovine).